The following is a 132-amino-acid chain: Protein NrdI (132 aa).

It belongs to the NrdI family.

Probably involved in ribonucleotide reductase function. The protein is Protein NrdI of Staphylococcus epidermidis (strain ATCC 35984 / DSM 28319 / BCRC 17069 / CCUG 31568 / BM 3577 / RP62A).